A 1498-amino-acid polypeptide reads, in one-letter code: ATP-binding cassette sub-family C member 6 (1498 aa).

Residues 1-37 (MNRGRSMATPGEQCAGLRVWNQTEQEPAAYHLLSLCF) are Extracellular-facing. The N-linked (GlcNAc...) asparagine glycan is linked to Asn21. A helical transmembrane segment spans residues 38–58 (VRAASSWVPPMYLWVLGPIYL). Over 59-78 (LYIHRHGRCYLRMSHLFKTK) the chain is Cytoplasmic. Residues 79 to 99 (MVLGLALILLYTFNVAVPLWR) form a helical membrane-spanning segment. Residues 100 to 104 (IHQGV) are Extracellular-facing. Residues 105–125 (PQAPELLIHPTVWLTTMSFAT) traverse the membrane as a helical segment. Residues 126–137 (FLIHMERRKGVR) are Cytoplasmic-facing. Residues 138–155 (SSGVLFGYWLLCCILPGI) form a helical membrane-spanning segment. At 156–173 (NTVQQASAGNFRQEPLHH) the chain is on the extracellular side. A helical transmembrane segment spans residues 174–194 (LATYLCLSLVVAELVLSCLVD). The Cytoplasmic portion of the chain corresponds to 195–300 (QPPFFSEDSQ…RSQRGPLLRA (106 aa)). Residues 301–321 (IWRVFRSTFLLGTLSLVISDA) traverse the membrane as a helical segment. The ABC transmembrane type-1 1 domain maps to 309–592 (FLLGTLSLVI…LPFSVHCIVQ (284 aa)). Topologically, residues 322–347 (FRFAVPKLLSLFLEFMGDRNSSAWTG) are extracellular. Asn341 carries an N-linked (GlcNAc...) asparagine glycan. The chain crosses the membrane as a helical span at residues 348–368 (WLLAVLMFAAACLQTLFEQQH). At 369 to 424 (MYRAKVLQMRLRTAITGLVYRKVLVLSSGSRKSSAAGDVVNLVSVDIQRLAESIIY) the chain is on the cytoplasmic side. A helical membrane pass occupies residues 425 to 445 (LNGLWLLFLWIFVCFVYLWQL). Topologically, residues 446–448 (LGP) are extracellular. The chain crosses the membrane as a helical span at residues 449-469 (SALTAVAVFLSLLPLNFFITK). Over 470–531 (KRGFHQEEQM…ALKTSTLLFS (62 aa)) the chain is Cytoplasmic. A helical transmembrane segment spans residues 532–552 (VSLVSFQVSTFLVALVVFAVH). The Extracellular segment spans residues 553-574 (TLVAEDNAMDAEKAFVTLTVLS). Residues 575–595 (ILNKAQAFLPFSVHCIVQARV) traverse the membrane as a helical segment. Residues 596-934 (SFDRLAAFLC…VKTTIYLSYL (339 aa)) lie on the Cytoplasmic side of the membrane. In terms of domain architecture, ABC transporter 1 spans 627–851 (ISVHNGTFAW…NGALVGLLDG (225 aa)). Residue 661-668 (GPVGAGKS) participates in ATP binding. The segment at 855–910 (PAGTHDAATSDDLGGFPGGGRPTCRPDRPRPTEAAPVKGRSTSEVQMEASLDDPEA) is disordered. Residues 935 to 955 (RAVGTPLCTYTLFLFLCQQVA) traverse the membrane as a helical segment. An ABC transmembrane type-1 2 domain is found at 942 to 1223 (CTYTLFLFLC…VVRSWTDLEN (282 aa)). Topologically, residues 956–992 (SFSQGYWLSLWADDPVVDGRQMHAALRGWVFGLLGCL) are extracellular. A helical membrane pass occupies residues 993–1013 (QAIGLFASMAAVFLGGARASG). Over 1014-1056 (LLFRSLLWDVARSPIGFFERTPVGNLLNRFSKETDTVDVDIPD) the chain is Cytoplasmic. A helical transmembrane segment spans residues 1057–1077 (KLRSLLTYAFGLLEVGLAVTM). Ala1078 is a topological domain (extracellular). Residues 1079 to 1099 (TPLAIVAILPLMVLYAGFQSL) traverse the membrane as a helical segment. Residues 1100–1170 (YVATSCQLRR…VADRWLATNL (71 aa)) lie on the Cytoplasmic side of the membrane. Residues 1171–1191 (ELLGNGLVFVAATCAVLSKAH) form a helical membrane-spanning segment. At 1192–1193 (LS) the chain is on the extracellular side. A helical membrane pass occupies residues 1194 to 1214 (AGLVGFSVSAALQVTQTLQWV). The Cytoplasmic portion of the chain corresponds to 1215–1498 (VRSWTDLENS…YRLAHESGLA (284 aa)). Residues 1260 to 1494 (IEFRDFGLRH…KGLFYRLAHE (235 aa)) form the ABC transporter 2 domain. Residue Ser1281 is modified to Phosphoserine. An ATP-binding site is contributed by 1294–1301 (GRTGAGKS).

Belongs to the ABC transporter superfamily. ABCC family. Conjugate transporter (TC 3.A.1.208) subfamily. Glycosylated.

The protein localises to the basolateral cell membrane. It localises to the basal cell membrane. It catalyses the reaction an S-substituted glutathione(in) + ATP + H2O = an S-substituted glutathione(out) + ADP + phosphate + H(+). The enzyme catalyses leukotriene C4(in) + ATP + H2O = leukotriene C4(out) + ADP + phosphate + H(+). Its function is as follows. ATP-dependent transporter of the ATP-binding cassette (ABC) family that actively extrudes physiological compounds, and xenobiotics from cells. Mediates ATP-dependent transport of glutathione conjugates such as leukotriene-c4 (LTC4) and N-ethylmaleimide S-glutathione (NEM-GS) (in vitro), and an anionic cyclopentapeptide endothelin antagonist, BQ-123. May contribute to regulate the transport of organic compounds in testes across the blood-testis-barrier. In terms of biological role, mediates the release of nucleoside triphosphates, predominantly ATP, into the circulation, where it is rapidly converted into AMP and the mineralization inhibitor inorganic pyrophosphate (PPi) by the ecto-enzyme ectonucleotide pyrophosphatase phosphodiesterase 1 (ENPP1), therefore playing a role in PPi homeostasis. The sequence is that of ATP-binding cassette sub-family C member 6 (Abcc6) from Mus musculus (Mouse).